Here is a 371-residue protein sequence, read N- to C-terminus: Flagellar P-ring protein 1 (371 aa).

The signal sequence occupies residues M1 to A19.

It belongs to the FlgI family. The basal body constitutes a major portion of the flagellar organelle and consists of four rings (L,P,S, and M) mounted on a central rod.

It is found in the periplasm. The protein resides in the bacterial flagellum basal body. In terms of biological role, assembles around the rod to form the L-ring and probably protects the motor/basal body from shearing forces during rotation. The protein is Flagellar P-ring protein 1 of Cereibacter sphaeroides (strain ATCC 17023 / DSM 158 / JCM 6121 / CCUG 31486 / LMG 2827 / NBRC 12203 / NCIMB 8253 / ATH 2.4.1.) (Rhodobacter sphaeroides).